The primary structure comprises 239 residues: Lysophospholipase-like protein 1 (239 aa).

At A2 the chain carries N-acetylalanine. Catalysis depends on charge relay system residues S125, D180, and H212.

The protein belongs to the AB hydrolase superfamily. AB hydrolase 2 family.

The protein localises to the cytoplasm. Its subcellular location is the cytosol. It catalyses the reaction S-hexadecanoyl-L-cysteinyl-[protein] + H2O = L-cysteinyl-[protein] + hexadecanoate + H(+). In terms of biological role, palmitoyl thioesterase that catalyzes depalmitoylation of CGAS and KCNMA1. Acts as a regulator of innate immunity by mediating depalmitoylation of CGAS, thereby preventing CGAS homodimerization and cyclic GMP-AMP synthase activity. Does not exhibit phospholipase nor triacylglycerol lipase activity, able to hydrolyze only short chain substrates due to its shallow active site. In Mus musculus (Mouse), this protein is Lysophospholipase-like protein 1.